The following is a 218-amino-acid chain: Cytidylate kinase (218 aa).

11–19 (GPGASGKGT) provides a ligand contact to ATP.

Belongs to the cytidylate kinase family. Type 1 subfamily.

It localises to the cytoplasm. It catalyses the reaction CMP + ATP = CDP + ADP. The catalysed reaction is dCMP + ATP = dCDP + ADP. In Neisseria meningitidis serogroup B (strain ATCC BAA-335 / MC58), this protein is Cytidylate kinase.